The chain runs to 210 residues: Large ribosomal subunit protein uL4 (210 aa).

Over residues 41–52 (MNNARQGTASSK) the composition is skewed to polar residues. Residues 41–80 (MNNARQGTASSKTRSEVRGGGRKPWRQKGTGRARAGSSRS) are disordered. The segment covering 60 to 71 (GGRKPWRQKGTG) has biased composition (basic residues).

It belongs to the universal ribosomal protein uL4 family. In terms of assembly, part of the 50S ribosomal subunit.

Functionally, one of the primary rRNA binding proteins, this protein initially binds near the 5'-end of the 23S rRNA. It is important during the early stages of 50S assembly. It makes multiple contacts with different domains of the 23S rRNA in the assembled 50S subunit and ribosome. Its function is as follows. Forms part of the polypeptide exit tunnel. This is Large ribosomal subunit protein uL4 from Acaryochloris marina (strain MBIC 11017).